Consider the following 1169-residue polypeptide: Phospholipid-transporting ATPase IF (1169 aa).

Over 1-47 (LGFDPPHQSDTRTIYIANRFPQNGLYTPQKFIDNRIISSKYTVWNFV) the chain is Cytoplasmic. Residues 48–69 (PKNLFEQFRRVANFYFLIIFLV) traverse the membrane as a helical segment. Over 70-74 (QLMID) the chain is Extracellular. A helical transmembrane segment spans residues 75–96 (TPTSPITSGLPLFFVITVTAIK). At 97-281 (QGYEDWLRHN…SAVEKSMNTF (185 aa)) the chain is on the cytoplasmic side. A helical membrane pass occupies residues 282–303 (LIIYLIILISEAIISTILKYTW). The Extracellular portion of the chain corresponds to 304-333 (QAEEKWDEPWYNQKTEHQRNSSKILRFISD). A helical membrane pass occupies residues 334–351 (FLAFLVLYNFIIPISLYV). Residues 352-868 (TVEMQKFLGS…HGHFYYIRIA (517 aa)) lie on the Cytoplasmic side of the membrane. Catalysis depends on Asp399, which acts as the 4-aspartylphosphate intermediate. Asp399, Lys400, Thr401, Glu523, Phe564, Lys587, Arg618, Thr698, Gly699, Asp700, Arg786, and Lys792 together coordinate ATP. Asp399 contributes to the Mg(2+) binding site. Thr401 serves as a coordination point for Mg(2+). A required for binding to the RING-finger of HLTF region spans residues 794 to 802 (KVIRLIKIS). Asp813 is a Mg(2+) binding site. Residues Asn816 and Asp817 each contribute to the ATP site. Asp817 contacts Mg(2+). A helical transmembrane segment spans residues 869-890 (TLVQYFFYKNVCFITPQFLYQF). Residues 891 to 902 (YCLFSQQTLYDS) lie on the Extracellular side of the membrane. Residues 903-922 (VYLTLYNICFTSLPILIYSL) traverse the membrane as a helical segment. Residues 923-952 (LEQHIDPHILQNKPTLYRDISKNRLLSIKT) are Cytoplasmic-facing. A helical membrane pass occupies residues 953 to 974 (FLYWTILGFSRSFIFLFGSYFL). The Extracellular portion of the chain corresponds to 975 to 989 (IGKDASLLGNGQMFG). A helical membrane pass occupies residues 990 to 1012 (NWTFGTLVFTVMVITVTVKMALE). The Cytoplasmic portion of the chain corresponds to 1013–1017 (THFWT). A helical membrane pass occupies residues 1018–1039 (WINHLVTWGSIIFYFVFSLFYG). Over 1040–1057 (GILWPFLGSQNMYFVFIQ) the chain is Extracellular. The helical transmembrane segment at 1058 to 1082 (LVSSGSAWFAIILMVVTCLFLDVMK) threads the bilayer. The Cytoplasmic segment spans residues 1083-1169 (KVFDRQLHPT…TLSTMDSSTC (87 aa)). Phosphoserine is present on Ser1146.

This sequence belongs to the cation transport ATPase (P-type) (TC 3.A.3) family. Type IV subfamily. As to quaternary structure, component of a P4-ATPase flippase complex which consists of a catalytic alpha subunit ATP11B and an accessory beta subunit TMEM30A. In terms of assembly, interacts with HLTF (via the RING-finger). Requires Mg(2+) as cofactor. Ubiquitously expressed.

The protein localises to the recycling endosome membrane. It is found in the early endosome. It localises to the endoplasmic reticulum. Its subcellular location is the golgi apparatus. The protein resides in the trans-Golgi network. The protein localises to the nucleus inner membrane. The catalysed reaction is ATP + H2O + phospholipidSide 1 = ADP + phosphate + phospholipidSide 2.. It carries out the reaction a 1,2-diacyl-sn-glycero-3-phospho-L-serine(out) + ATP + H2O = a 1,2-diacyl-sn-glycero-3-phospho-L-serine(in) + ADP + phosphate + H(+). It catalyses the reaction a 1,2-diacyl-sn-glycero-3-phosphoethanolamine(out) + ATP + H2O = a 1,2-diacyl-sn-glycero-3-phosphoethanolamine(in) + ADP + phosphate + H(+). Its function is as follows. Catalytic component of a P4-ATPase flippase complex which catalyzes the hydrolysis of ATP coupled to the transport of aminophospholipids, phosphatidylserines (PS) and phosphatidylethanolamines (PE), from the outer to the inner leaflet of intracellular membranes. May contribute to the maintenance of membrane lipid asymmetry in endosome compartment. Functionally, appears to play a role in the subnuclear trafficking of transcription factors with RING motifs. This Oryctolagus cuniculus (Rabbit) protein is Phospholipid-transporting ATPase IF (ATP11B).